The chain runs to 318 residues: Thymidylate synthase (318 aa).

DUMP is bound by residues Arg-25 and 180–181 (RR). Residue Cys-200 is the Nucleophile of the active site. DUMP-binding positions include 220-223 (RSGD), Asn-231, and 261-263 (HIY). Asp-223 provides a ligand contact to (6R)-5,10-methylene-5,6,7,8-tetrahydrofolate. Ala-317 provides a ligand contact to (6R)-5,10-methylene-5,6,7,8-tetrahydrofolate.

Belongs to the thymidylate synthase family. Bacterial-type ThyA subfamily. Homodimer.

The protein resides in the cytoplasm. The catalysed reaction is dUMP + (6R)-5,10-methylene-5,6,7,8-tetrahydrofolate = 7,8-dihydrofolate + dTMP. It participates in pyrimidine metabolism; dTTP biosynthesis. Its function is as follows. Catalyzes the reductive methylation of 2'-deoxyuridine-5'-monophosphate (dUMP) to 2'-deoxythymidine-5'-monophosphate (dTMP) while utilizing 5,10-methylenetetrahydrofolate (mTHF) as the methyl donor and reductant in the reaction, yielding dihydrofolate (DHF) as a by-product. This enzymatic reaction provides an intracellular de novo source of dTMP, an essential precursor for DNA biosynthesis. In Bacillus cereus (strain ZK / E33L), this protein is Thymidylate synthase.